The primary structure comprises 636 residues: Transcription termination factor FttA (636 aa).

The tract at residues Glu4–Arg72 is KHa. The tract at residues Lys73–Pro140 is KHb. The segment at Asn181–Pro383 is metallo-beta-lactamase N-terminus. Zn(2+) contacts are provided by His242, His244, Asp246, His247, His329, and Asp352. Positions Gln384–Ser577 are beta-Casp. The tract at residues Gly578–Lys636 is metallo-beta-lactamase C-terminus. Position 603 (His603) interacts with Zn(2+).

This sequence belongs to the metallo-beta-lactamase superfamily. RNA-metabolizing metallo-beta-lactamase-like family. FttA subfamily. As to quaternary structure, homodimer. Interacts with RNA polymerase (RNAP), interacts with the Spt4-Spt5 complex. Zn(2+) serves as cofactor.

In terms of biological role, terminates transcription on the whole genome. Termination is linked to FttA-mediated RNA cleavage and does not require NTP hydrolysis. Cleaves endonucleolytically at the RNA exit channel of RNA polymerase (RNAP); the 5'-3' exonuclease activity of this protein degrades the nascent RNA released from RNAP. Functionally, terminates transcription genome-wide in M.maripaludis. Restores wild-type growth to a strain of Methanococcus maripaludis depleted for this gene at 22 degrees Celsius and prevents transcriptional read-through. Transcription termination is most effective in vivo on RNAs with more than one U4-tract in their 3'-ends. Has endonuclease activity after U-rich tracts in transcription termination sequences. This is Transcription termination factor FttA from Lokiarchaeum sp. (strain GC14_75).